A 205-amino-acid chain; its full sequence is Holliday junction branch migration complex subunit RuvA (205 aa).

Residues 1–64 form a domain I region; that stretch reads MIGRLRGLLV…EDAQLLYGFI (64 aa). The tract at residues 65-143 is domain II; the sequence is TKQERALFRL…SLMEASHGNE (79 aa). The interval 144 to 156 is flexible linker; that stretch reads REFVLQSNYTPAP. Residues 157-205 are domain III; it reads VVNTAEEDAISALLALGYKPAQASKAVSSVFEEGMDSETLIKASLKSML.

Belongs to the RuvA family. In terms of assembly, homotetramer. Forms an RuvA(8)-RuvB(12)-Holliday junction (HJ) complex. HJ DNA is sandwiched between 2 RuvA tetramers; dsDNA enters through RuvA and exits via RuvB. An RuvB hexamer assembles on each DNA strand where it exits the tetramer. Each RuvB hexamer is contacted by two RuvA subunits (via domain III) on 2 adjacent RuvB subunits; this complex drives branch migration. In the full resolvosome a probable DNA-RuvA(4)-RuvB(12)-RuvC(2) complex forms which resolves the HJ.

Its subcellular location is the cytoplasm. Functionally, the RuvA-RuvB-RuvC complex processes Holliday junction (HJ) DNA during genetic recombination and DNA repair, while the RuvA-RuvB complex plays an important role in the rescue of blocked DNA replication forks via replication fork reversal (RFR). RuvA specifically binds to HJ cruciform DNA, conferring on it an open structure. The RuvB hexamer acts as an ATP-dependent pump, pulling dsDNA into and through the RuvAB complex. HJ branch migration allows RuvC to scan DNA until it finds its consensus sequence, where it cleaves and resolves the cruciform DNA. The polypeptide is Holliday junction branch migration complex subunit RuvA (Shewanella loihica (strain ATCC BAA-1088 / PV-4)).